Consider the following 140-residue polypeptide: Nucleoside diphosphate kinase (140 aa).

Residues K9, F57, R85, T91, R102, and N112 each contribute to the ATP site. The active-site Pros-phosphohistidine intermediate is H115.

This sequence belongs to the NDK family. As to quaternary structure, homotetramer. The cofactor is Mg(2+).

The protein resides in the cytoplasm. The enzyme catalyses a 2'-deoxyribonucleoside 5'-diphosphate + ATP = a 2'-deoxyribonucleoside 5'-triphosphate + ADP. It catalyses the reaction a ribonucleoside 5'-diphosphate + ATP = a ribonucleoside 5'-triphosphate + ADP. Its function is as follows. Major role in the synthesis of nucleoside triphosphates other than ATP. The ATP gamma phosphate is transferred to the NDP beta phosphate via a ping-pong mechanism, using a phosphorylated active-site intermediate. The polypeptide is Nucleoside diphosphate kinase (Chlorobium luteolum (strain DSM 273 / BCRC 81028 / 2530) (Pelodictyon luteolum)).